The sequence spans 470 residues: uncharacterized protein (470 aa).

The stretch at 418–453 (SECCEEQEEKEKKKEKEKEKKKEKDDDDDQQNNNNN) forms a coiled coil. A disordered region spans residues 423–470 (EQEEKEKKKEKEKEKKKEKDDDDDQQNNNNNDQNGLGLGLGLNFGLNL). Residues 426–441 (EKEKKKEKEKEKKKEK) show a composition bias toward basic and acidic residues. The segment covering 448–457 (QNNNNNDQNG) has biased composition (low complexity).

This is an uncharacterized protein from Acidianus bottle-shaped virus (isolate Italy/Pozzuoli) (ABV).